A 431-amino-acid polypeptide reads, in one-letter code: Aspartate--tRNA(Asp/Asn) ligase (431 aa).

Glu-170 provides a ligand contact to L-aspartate. The tract at residues 192–195 is aspartate; the sequence is QLYK. Arg-214 is an L-aspartate binding site. ATP-binding positions include 214 to 216, 222 to 224, and Glu-354; these read RAE and RHL. The Mg(2+) site is built by Glu-354 and Ser-357. L-aspartate-binding residues include Ser-357 and Arg-361. Residue 402–405 participates in ATP binding; it reads GLER.

It belongs to the class-II aminoacyl-tRNA synthetase family. Type 2 subfamily. Homodimer. The cofactor is Mg(2+).

The protein localises to the cytoplasm. It catalyses the reaction tRNA(Asx) + L-aspartate + ATP = L-aspartyl-tRNA(Asx) + AMP + diphosphate. Functionally, aspartyl-tRNA synthetase with relaxed tRNA specificity since it is able to aspartylate not only its cognate tRNA(Asp) but also tRNA(Asn). Reaction proceeds in two steps: L-aspartate is first activated by ATP to form Asp-AMP and then transferred to the acceptor end of tRNA(Asp/Asn). The protein is Aspartate--tRNA(Asp/Asn) ligase of Methanopyrus kandleri (strain AV19 / DSM 6324 / JCM 9639 / NBRC 100938).